Here is a 436-residue protein sequence, read N- to C-terminus: GTPase Der (436 aa).

2 EngA-type G domains span residues 4–167 and 176–351; these read PVVA…PKRG and IKFC…ENHA. GTP-binding positions include 10-17, 57-61, 119-122, 182-189, 229-233, and 294-297; these read GRPNVGKS, DTGGI, NKID, DTAGM, and NKWD. Residues 352-436 enclose the KH-like domain; sequence MRVQTNVLNE…PIKIIARPRK (85 aa).

It belongs to the TRAFAC class TrmE-Era-EngA-EngB-Septin-like GTPase superfamily. EngA (Der) GTPase family. As to quaternary structure, associates with the 50S ribosomal subunit.

Its function is as follows. GTPase that plays an essential role in the late steps of ribosome biogenesis. The polypeptide is GTPase Der (Geobacillus sp. (strain WCH70)).